Reading from the N-terminus, the 92-residue chain is Putative defensin-like protein 251 (92 aa).

The signal sequence occupies residues 1–27; sequence MRCVTSFVVFCILMFFVLNIFTVEVKA. Cystine bridges form between Cys-34-Cys-90, Cys-45-Cys-69, Cys-53-Cys-82, and Cys-67-Cys-84.

This sequence belongs to the DEFL family.

It is found in the secreted. This is Putative defensin-like protein 251 (SCRL12) from Arabidopsis thaliana (Mouse-ear cress).